Consider the following 598-residue polypeptide: Arginine--tRNA ligase (598 aa).

The 'HIGH' region motif lies at 131–141 (ANPTGPMHVGH). The tract at residues 288–308 (KLPPPKSKKGQPPAQPQPDEE) is disordered.

It belongs to the class-I aminoacyl-tRNA synthetase family. In terms of assembly, monomer.

It localises to the cytoplasm. The enzyme catalyses tRNA(Arg) + L-arginine + ATP = L-arginyl-tRNA(Arg) + AMP + diphosphate. The sequence is that of Arginine--tRNA ligase from Anaeromyxobacter sp. (strain K).